The sequence spans 549 residues: Membrane protein insertase YidC (549 aa).

A helical transmembrane segment spans residues 9 to 29 (LRLILAIALSFLFIALYSYFF). Low complexity predominate over residues 37–51 (TETTKQETTNNHTAT). The tract at residues 37-56 (TETTKQETTNNHTATSPTAS) is disordered. Helical transmembrane passes span 328–348 (VIEYGLITFFAKGVFVLLDYL), 351–371 (FVGNWGWAIILLTIIVRIILY), 417–437 (GANPLGGCLPLILQIPVFFAI), 452–472 (WVLWIHDLSIMDPYFILPLLM), and 498–518 (LLPLLFTIFLITFPAGLVLYW).

The protein belongs to the OXA1/ALB3/YidC family. Type 1 subfamily. In terms of assembly, interacts with the Sec translocase complex via SecD. Specifically interacts with transmembrane segments of nascent integral membrane proteins during membrane integration.

It is found in the cell inner membrane. Functionally, required for the insertion and/or proper folding and/or complex formation of integral membrane proteins into the membrane. Involved in integration of membrane proteins that insert both dependently and independently of the Sec translocase complex, as well as at least some lipoproteins. Aids folding of multispanning membrane proteins. The polypeptide is Membrane protein insertase YidC (Helicobacter pylori (strain J99 / ATCC 700824) (Campylobacter pylori J99)).